The following is a 483-amino-acid chain: Probable 4-hydroxyphenylacetate 3-monooxygenase (483 aa).

Residues 104-108 (RSPDY) and histidine 150 contribute to the substrate site. Residues 150-152 (HTF), 156-159 (QVNR), and threonine 193 contribute to the FAD site. 206-207 (AP) is a binding site for substrate. An FAD-binding site is contributed by 452 to 455 (DPIR).

It belongs to the FADH(2)-utilizing monooxygenase family.

The enzyme catalyses 4-hydroxyphenylacetate + FADH2 + O2 = 3,4-dihydroxyphenylacetate + FAD + H2O + H(+). Its pathway is aromatic compound metabolism; 4-hydroxyphenylacetate degradation; pyruvate and succinate semialdehyde from 4-hydroxyphenylacetate: step 1/7. Its function is as follows. Catalyzes the hydroxylation of 4-hydroxyphenylacetic acid (4HPA), leading to the production of 3,4-dihydroxyphenylacetic acid (DHPA). This is Probable 4-hydroxyphenylacetate 3-monooxygenase (yoaI) from Bacillus subtilis (strain 168).